The primary structure comprises 145 residues: Basic phospholipase A2 S11-61 (145 aa).

The N-terminal stretch at 1–19 (MYPVHLLVLLAVCVSLLGA) is a signal peptide. Positions 20–27 (SNIPPQPL) are excised as a propeptide. 7 cysteine pairs are disulfide-bonded: cysteine 38-cysteine 98, cysteine 54-cysteine 144, cysteine 56-cysteine 72, cysteine 71-cysteine 125, cysteine 78-cysteine 118, cysteine 87-cysteine 111, and cysteine 105-cysteine 116. Ca(2+)-binding residues include tyrosine 55, glycine 57, and glycine 59. Histidine 75 is an active-site residue. Residue aspartate 76 participates in Ca(2+) binding. The active site involves aspartate 119.

Belongs to the phospholipase A2 family. Group I subfamily. D49 sub-subfamily. Requires Ca(2+) as cofactor. As to expression, expressed by the venom gland.

It localises to the secreted. It carries out the reaction a 1,2-diacyl-sn-glycero-3-phosphocholine + H2O = a 1-acyl-sn-glycero-3-phosphocholine + a fatty acid + H(+). Functionally, snake venom phospholipase A2 (PLA2) that inhibits collagen-induced platelet aggregation. PLA2 catalyzes the calcium-dependent hydrolysis of the 2-acyl groups in 3-sn-phosphoglycerides. In Austrelaps superbus (Lowland copperhead snake), this protein is Basic phospholipase A2 S11-61.